A 384-amino-acid chain; its full sequence is Somatostatin receptor type 4 (384 aa).

The interval 1 to 34 (MNTPATLPLGGEDTTWTPGINASWAPDEEEDAVR) is disordered. Residues 1–41 (MNTPATLPLGGEDTTWTPGINASWAPDEEEDAVRSDGTGTA) lie on the Extracellular side of the membrane. The N-linked (GlcNAc...) asparagine glycan is linked to asparagine 21. The helical transmembrane segment at 42 to 69 (GMVTIQCIYALVCLVGLVGNALVIFVIL) threads the bilayer. Residues 70-79 (RYAKMKTATN) are Cytoplasmic-facing. The chain crosses the membrane as a helical span at residues 80 to 105 (IYLLNLAVADELFMLSVPFVASAAAL). Residues 106 to 116 (RHWPFGAVLCR) are Extracellular-facing. Cysteines 115 and 194 form a disulfide. Residues 117–138 (AVLSVDGLNMFTSVFCLTVLSV) traverse the membrane as a helical segment. The Cytoplasmic portion of the chain corresponds to 139–160 (DRYVAVVHPLRAATYRRPSVAK). A helical transmembrane segment spans residues 161-181 (LINLGVWLASLLVTLPIAVFA). At 182–203 (DTRPARGGEAVACNLHWPHPAW) the chain is on the extracellular side. A helical membrane pass occupies residues 204 to 228 (SAVFVIYTFLLGFLLPVLAIGLCYL). At 229-254 (LIVGKMRAVALRAGWQQRRRSEKKIT) the chain is on the cytoplasmic side. A helical transmembrane segment spans residues 255–280 (RLVLMVVTVFVLCWMPFYVVQLLNLF). The Extracellular segment spans residues 281–287 (VTSLDAT). The helical transmembrane segment at 288 to 311 (VNHVSLILSYANSCANPILYGFLS) threads the bilayer. Residues 312–384 (DNFRRSFQRV…RVPFTKTTTF (73 aa)) lie on the Cytoplasmic side of the membrane. The S-palmitoyl cysteine moiety is linked to residue cysteine 323.

Belongs to the G-protein coupled receptor 1 family. As to expression, brain, lung, heart and islets. Moderate levels in the hippocampus, cortex and olfactory bulb.

It localises to the cell membrane. Functionally, receptor for somatostatin-14. The activity of this receptor is mediated by G proteins which inhibits adenylyl cyclase. It is functionally coupled not only to inhibition of adenylate cyclase, but also to activation of both arachidonate release and mitogen-activated protein (MAP) kinase cascade. In Rattus norvegicus (Rat), this protein is Somatostatin receptor type 4 (Sstr4).